We begin with the raw amino-acid sequence, 397 residues long: Elongation factor Tu (397 aa).

A tr-type G domain is found at 10 to 206 (KPHVNIGTIG…AVDSYIPTPE (197 aa)). Residues 19–26 (GHVDHGKT) form a G1 region. 19-26 (GHVDHGKT) is a GTP binding site. Position 26 (threonine 26) interacts with Mg(2+). The segment at 60-64 (GITIN) is G2. A G3 region spans residues 81 to 84 (DCPG). GTP-binding positions include 81–85 (DCPGH) and 136–139 (NKAD). The tract at residues 136–139 (NKAD) is G4. Residues 174–176 (SAL) form a G5 region.

The protein belongs to the TRAFAC class translation factor GTPase superfamily. Classic translation factor GTPase family. EF-Tu/EF-1A subfamily. As to quaternary structure, monomer.

The protein localises to the cytoplasm. It carries out the reaction GTP + H2O = GDP + phosphate + H(+). Its function is as follows. GTP hydrolase that promotes the GTP-dependent binding of aminoacyl-tRNA to the A-site of ribosomes during protein biosynthesis. In Clostridium beijerinckii (strain ATCC 51743 / NCIMB 8052) (Clostridium acetobutylicum), this protein is Elongation factor Tu.